Here is a 370-residue protein sequence, read N- to C-terminus: Pyruvate dehydrogenase E1 component subunit alpha (370 aa).

As to quaternary structure, heterodimer of an alpha and a beta chain. Thiamine diphosphate is required as a cofactor.

The enzyme catalyses N(6)-[(R)-lipoyl]-L-lysyl-[protein] + pyruvate + H(+) = N(6)-[(R)-S(8)-acetyldihydrolipoyl]-L-lysyl-[protein] + CO2. Its function is as follows. The pyruvate dehydrogenase complex catalyzes the overall conversion of pyruvate to acetyl-CoA and CO(2). It contains multiple copies of three enzymatic components: pyruvate dehydrogenase (E1), dihydrolipoamide acetyltransferase (E2) and lipoamide dehydrogenase (E3). The protein is Pyruvate dehydrogenase E1 component subunit alpha (pdhA) of Staphylococcus epidermidis (strain ATCC 35984 / DSM 28319 / BCRC 17069 / CCUG 31568 / BM 3577 / RP62A).